The chain runs to 73 residues: Protein kish (73 aa).

An N-terminal signal peptide occupies residues Met-1 to Cys-21. Topologically, residues Thr-22–Arg-52 are lumenal. Residues Ala-53–Ser-73 form a helical membrane-spanning segment.

This sequence belongs to the KISH family.

It localises to the golgi apparatus membrane. It is found in the endoplasmic reticulum membrane. Its function is as follows. Involved in the early part of the secretory pathway. This is Protein kish (ksh1) from Schizosaccharomyces pombe (strain 972 / ATCC 24843) (Fission yeast).